The sequence spans 137 residues: 14 kDa proline-rich protein DC2.15 (137 aa).

The signal sequence occupies residues 1-25 (MGSKNSASVALFFTLNILFFALVSS). Residues 30–53 (PDPYKPKPKPTPKPTPTPYPSAGK) form a disordered region. Over residues 38–48 (KPTPKPTPTPY) the composition is skewed to pro residues. A helical transmembrane segment spans residues 88 to 104 (LEGLVNLEAAVCLCTAI).

The protein resides in the membrane. May be connected with the initiation of embryogenesis or with the metabolic changes produced by the removal of auxins. In Daucus carota (Wild carrot), this protein is 14 kDa proline-rich protein DC2.15.